A 103-amino-acid polypeptide reads, in one-letter code: ATP synthase F(0) complex subunit g, mitochondrial (103 aa).

A2 carries the post-translational modification N-acetylalanine. 4 positions are modified to N6-acetyllysine: K11, K24, K35, and K54.

The protein belongs to the ATPase g subunit family. As to quaternary structure, component of the ATP synthase complex composed at least of ATP5F1A/subunit alpha, ATP5F1B/subunit beta, ATP5MC1/subunit c (homooctomer), MT-ATP6/subunit a, MT-ATP8/subunit 8, ATP5ME/subunit e, ATP5MF/subunit f, ATP5MG/subunit g, ATP5MK/subunit k, ATP5MJ/subunit j, ATP5F1C/subunit gamma, ATP5F1D/subunit delta, ATP5F1E/subunit epsilon, ATP5PF/subunit F6, ATP5PB/subunit b, ATP5PD/subunit d, ATP5PO/subunit OSCP. ATP synthase complex consists of a soluble F(1) head domain (subunits alpha(3) and beta(3)) - the catalytic core - and a membrane F(0) domain - the membrane proton channel (subunits c, a, 8, e, f, g, k and j). These two domains are linked by a central stalk (subunits gamma, delta, and epsilon) rotating inside the F1 region and a stationary peripheral stalk (subunits F6, b, d, and OSCP).

Its subcellular location is the mitochondrion. It localises to the mitochondrion inner membrane. Functionally, subunit g, of the mitochondrial membrane ATP synthase complex (F(1)F(0) ATP synthase or Complex V) that produces ATP from ADP in the presence of a proton gradient across the membrane which is generated by electron transport complexes of the respiratory chain. ATP synthase complex consist of a soluble F(1) head domain - the catalytic core - and a membrane F(1) domain - the membrane proton channel. These two domains are linked by a central stalk rotating inside the F(1) region and a stationary peripheral stalk. During catalysis, ATP synthesis in the catalytic domain of F(1) is coupled via a rotary mechanism of the central stalk subunits to proton translocation. In vivo, can only synthesize ATP although its ATP hydrolase activity can be activated artificially in vitro. Part of the complex F(0) domain. This chain is ATP synthase F(0) complex subunit g, mitochondrial, found in Pongo abelii (Sumatran orangutan).